The primary structure comprises 391 residues: MQGLNADEVLRLLRSLIPGELATGRGQRGDPPEAQDLCADSRLDAEPIRADSLDRLNLASALNRFFRLHETGVEDRLLAVRRIGDMAELIADASQHTSGLTFSTSGSTGTPQPHHHSWAALTQEAEALANALGSHPRVIAWLPVHHLYGFVFGVALPRALGSTVIESHAAPTALFREPAPDDLIATVPARWRYLFDSNHRFPGGTGISSTAALETACRNGLLQAGLDALLEVYGATEAGGIGLRWAPSEDYRLLPHWHGDATATSSALNPDGAAVTVAPLDRLQWRDERVFRPTGRIDDIIQIGGVNVSPGHVARRLESHEAVAACAVRSHGEGSRRRLKAFIVPARSDADPETLRQTLENWIWEHLPAVERPTDLRIGTELPRNAMGKLQ.

The protein belongs to the ATP-dependent AMP-binding enzyme family.

The catalysed reaction is (E)-4-coumarate + ATP + CoA = (E)-4-coumaroyl-CoA + AMP + diphosphate. In terms of biological role, converts p-coumaric acid into p-coumaryl CoA. This is necessary for the activation of the photoactive yellow protein (PYP) chromophore. The protein is 4-coumarate--CoA ligase (pcl) of Halorhodospira halophila (Ectothiorhodospira halophila).